We begin with the raw amino-acid sequence, 298 residues long: tRNA dimethylallyltransferase (298 aa).

Residue 12–19 (GPTASGKT) participates in ATP binding. 14–19 (TASGKT) lines the substrate pocket. The interaction with substrate tRNA stretch occupies residues 37–40 (DSRQ).

Belongs to the IPP transferase family. As to quaternary structure, monomer. The cofactor is Mg(2+).

The enzyme catalyses adenosine(37) in tRNA + dimethylallyl diphosphate = N(6)-dimethylallyladenosine(37) in tRNA + diphosphate. Its function is as follows. Catalyzes the transfer of a dimethylallyl group onto the adenine at position 37 in tRNAs that read codons beginning with uridine, leading to the formation of N6-(dimethylallyl)adenosine (i(6)A). This chain is tRNA dimethylallyltransferase, found in Synechococcus sp. (strain CC9902).